We begin with the raw amino-acid sequence, 468 residues long: MKKVNHWINGKNVAGNDYFLTTNPATGEVLADVASGGEAEINQAVATAKEAFPKWANLPMKERARLMRRLGDLIDQNVPEIAAMETADTGLPIHQTKNVLIPRASHNFEFFAEVCQQMNGKTYPVDDKMLNYTLVQPVGVCALVSPWNVPFMTATWKVAPCLALGITAVLKMSELSPLTADRLGELALEAGIPAGVLNVVQGYGATAGDALVRHHDVRAVSFTGGTATGRNIMKNAGLKKYSMELGGKSPVLIFEDADIERALDAALFTIFSINGERCTAGSRIFIQQSIYPEFVKFAERANRVRVGDPTDPNTQVGALISQQHWEKVSGYIRLGIEEGATLLAGGPDKPSDLPAHLKGGNFLRPTVLADVDNRMRVAQEEIFGPVACLLPFKDEAEALRLANDVEYGLASYIWTQDVSKVLRLARGIEAGMVFVNTQFVRDLRHAFGGVKPRTGREGGGYSSKCSRK.

E244 is a catalytic residue. C278 acts as the Nucleophile in catalysis.

Belongs to the aldehyde dehydrogenase family. As to quaternary structure, homodimer.

It catalyses the reaction 2-hydroxy-5-carboxymethylmuconate semialdehyde + NAD(+) + H2O = (2E,4Z)-5-hydroxypenta-2,4-diene-1,2,5-tricarboxylate + NADH + 2 H(+). It functions in the pathway aromatic compound metabolism; 4-hydroxyphenylacetate degradation; pyruvate and succinate semialdehyde from 4-hydroxyphenylacetate: step 3/7. In terms of biological role, catalyzes the conversion of 5-carboxymethyl-2-hydroxy-muconic semialdehyde (CHMS) into 5-carboxymethyl-2-hydroxy-muconic acid (CHM or (2E,4Z)-5-hydroxypenta-2,4-diene-1,2,5-tricarboxylate). Is involved in a meta-cleavage pathway for the catabolism of 4-hydroxyphenylacetate (4-HPA) via homoprotocatechuate (HPC or 3,4-dihydroxyphenylacetate). This Escherichia coli protein is 5-carboxymethyl-2-hydroxymuconate semialdehyde dehydrogenase.